The sequence spans 478 residues: Noelin-3 (478 aa).

An N-terminal signal peptide occupies residues 1 to 23 (MSPPLLKLGAVLSTMAMISNWMS). 5 N-linked (GlcNAc...) asparagine glycosylation sites follow: Asn-33, Asn-95, Asn-179, Asn-299, and Asn-465. Residues 77–217 (CSRDAKSRQL…TRLRDCMKKL (141 aa)) adopt a coiled-coil conformation. The region spanning 218–470 (TCGKLMKITG…QVLFNVTLFH (253 aa)) is the Olfactomedin-like domain. Cys-219 and Cys-401 form a disulfide bridge.

In terms of assembly, peripherally associated with AMPAR complex. AMPAR complex consists of an inner core made of 4 pore-forming GluA/GRIA proteins (GRIA1, GRIA2, GRIA3 and GRIA4) and 4 major auxiliary subunits arranged in a twofold symmetry. One of the two pairs of distinct binding sites is occupied either by CNIH2, CNIH3 or CACNG2, CACNG3. The other harbors CACNG2, CACNG3, CACNG4, CACNG8 or GSG1L. This inner core of AMPAR complex is complemented by outer core constituents binding directly to the GluA/GRIA proteins at sites distinct from the interaction sites of the inner core constituents. Outer core constituents include at least PRRT1, PRRT2, CKAMP44/SHISA9, FRRS1L and NRN1. The proteins of the inner and outer core serve as a platform for other, more peripherally associated AMPAR constituents, including OLFM3. Alone or in combination, these auxiliary subunits control the gating and pharmacology of the AMPAR complex and profoundly impact their biogenesis and protein processing. Homodimer. Interacts with MYOC. Interacts with OLFM2. In terms of tissue distribution, in the eye, expressed in trabecular meshwork and neural retina; in non-ocular tissues, expressed in brain and lung.

The protein localises to the secreted. Its subcellular location is the synapse. The chain is Noelin-3 (OLFM3) from Homo sapiens (Human).